The chain runs to 716 residues: Epidermal growth factor receptor kinase substrate 8-like protein 1 (716 aa).

Residues 35–164 (QYHVNHLVTF…LQNYRSGRGE (130 aa)) form the PTB domain. Disordered regions lie at residues 175 to 194 (EELR…QRRP), 203 to 249 (VEPS…GPEL), 404 to 472 (PGVE…ETES), 528 to 582 (YNIL…SLDP), and 600 to 628 (SRLA…PRSE). A Phosphoserine modification is found at S182. T187 carries the post-translational modification Phosphothreonine. Basic and acidic residues predominate over residues 435–446 (PWEDPVEKQLQH). Positions 453–464 (QSAPQVAVNGQQ) are enriched in polar residues. One can recognise an SH3 domain in the interval 477-536 (KARKWVLCNYDFQARNGSELSVKHRDVLEVLDDRRKWWKVRDHQGQEGYVPYNILTPHPG). Over residues 553-563 (TPPPPPAPAPA) the composition is skewed to pro residues. The stretch at 682-713 (VQRALLEDREKVSELEAVMEKQKKKVEGETKT) forms a coiled coil.

It belongs to the EPS8 family. Interacts with ABI1. Part of a complex that contains SOS1, ABI1 and EPS8L2. Associates with F-actin. In terms of tissue distribution, detected in placenta, skin, mammary gland, bone marrow and stomach.

It is found in the cytoplasm. In terms of biological role, stimulates guanine exchange activity of SOS1. May play a role in membrane ruffling and remodeling of the actin cytoskeleton. The protein is Epidermal growth factor receptor kinase substrate 8-like protein 1 (Eps8l1) of Mus musculus (Mouse).